A 237-amino-acid polypeptide reads, in one-letter code: Ribose-5-phosphate isomerase A (237 aa).

Substrate contacts are provided by residues S30–T33, D87–D90, and K100–G103. E109 serves as the catalytic Proton acceptor. K127 provides a ligand contact to substrate.

The protein belongs to the ribose 5-phosphate isomerase family. In terms of assembly, homodimer.

The enzyme catalyses aldehydo-D-ribose 5-phosphate = D-ribulose 5-phosphate. Its pathway is carbohydrate degradation; pentose phosphate pathway; D-ribose 5-phosphate from D-ribulose 5-phosphate (non-oxidative stage): step 1/1. Its function is as follows. Catalyzes the reversible conversion of ribose-5-phosphate to ribulose 5-phosphate. The chain is Ribose-5-phosphate isomerase A from Prochlorococcus marinus (strain MIT 9211).